The primary structure comprises 617 residues: Dihydroxy-acid dehydratase (617 aa).

Position 81 (aspartate 81) interacts with Mg(2+). A [2Fe-2S] cluster-binding site is contributed by cysteine 122. Positions 123 and 124 each coordinate Mg(2+). Lysine 124 is modified (N6-carboxylysine). Residue cysteine 195 coordinates [2Fe-2S] cluster. Glutamate 490 lines the Mg(2+) pocket. Serine 516 (proton acceptor) is an active-site residue.

Belongs to the IlvD/Edd family. Homodimer. Requires [2Fe-2S] cluster as cofactor. The cofactor is Mg(2+).

It catalyses the reaction (2R)-2,3-dihydroxy-3-methylbutanoate = 3-methyl-2-oxobutanoate + H2O. The enzyme catalyses (2R,3R)-2,3-dihydroxy-3-methylpentanoate = (S)-3-methyl-2-oxopentanoate + H2O. It functions in the pathway amino-acid biosynthesis; L-isoleucine biosynthesis; L-isoleucine from 2-oxobutanoate: step 3/4. It participates in amino-acid biosynthesis; L-valine biosynthesis; L-valine from pyruvate: step 3/4. Its function is as follows. Functions in the biosynthesis of branched-chain amino acids. Catalyzes the dehydration of (2R,3R)-2,3-dihydroxy-3-methylpentanoate (2,3-dihydroxy-3-methylvalerate) into 2-oxo-3-methylpentanoate (2-oxo-3-methylvalerate) and of (2R)-2,3-dihydroxy-3-methylbutanoate (2,3-dihydroxyisovalerate) into 2-oxo-3-methylbutanoate (2-oxoisovalerate), the penultimate precursor to L-isoleucine and L-valine, respectively. This chain is Dihydroxy-acid dehydratase, found in Acidiphilium cryptum (strain JF-5).